A 471-amino-acid chain; its full sequence is Glutamate--tRNA ligase 1 (471 aa).

The 'HIGH' region motif lies at 10-20 (PSPTGYLHIGG). Positions 99, 101, 126, and 128 each coordinate Zn(2+). Residues 238–242 (RLSKR) carry the 'KMSKS' region motif. Residue lysine 241 participates in ATP binding.

It belongs to the class-I aminoacyl-tRNA synthetase family. Glutamate--tRNA ligase type 1 subfamily. Monomer. Zn(2+) serves as cofactor.

The protein localises to the cytoplasm. It carries out the reaction tRNA(Glu) + L-glutamate + ATP = L-glutamyl-tRNA(Glu) + AMP + diphosphate. Catalyzes the attachment of glutamate to tRNA(Glu) in a two-step reaction: glutamate is first activated by ATP to form Glu-AMP and then transferred to the acceptor end of tRNA(Glu). In Alkalilimnicola ehrlichii (strain ATCC BAA-1101 / DSM 17681 / MLHE-1), this protein is Glutamate--tRNA ligase 1.